The sequence spans 863 residues: Glycerol-3-phosphate acyltransferase (863 aa).

The segment at Met1–Thr29 is disordered. Residues Glu12–Thr29 are compositionally biased toward polar residues. Positions Ser343–Met348 match the HXXXXD motif motif.

This sequence belongs to the GPAT/DAPAT family.

The protein localises to the cell inner membrane. The enzyme catalyses sn-glycerol 3-phosphate + an acyl-CoA = a 1-acyl-sn-glycero-3-phosphate + CoA. It participates in phospholipid metabolism; CDP-diacylglycerol biosynthesis; CDP-diacylglycerol from sn-glycerol 3-phosphate: step 1/3. The protein is Glycerol-3-phosphate acyltransferase of Xylella fastidiosa (strain M23).